The sequence spans 268 residues: 3-methyl-2-oxobutanoate hydroxymethyltransferase (268 aa).

Mg(2+)-binding residues include D44 and D83. Residues D44 to S45, D83, and K113 each bind 3-methyl-2-oxobutanoate. E115 serves as a coordination point for Mg(2+). The active-site Proton acceptor is E182.

It belongs to the PanB family. In terms of assembly, homodecamer; pentamer of dimers. Mg(2+) serves as cofactor.

It is found in the cytoplasm. The catalysed reaction is 3-methyl-2-oxobutanoate + (6R)-5,10-methylene-5,6,7,8-tetrahydrofolate + H2O = 2-dehydropantoate + (6S)-5,6,7,8-tetrahydrofolate. It functions in the pathway cofactor biosynthesis; (R)-pantothenate biosynthesis; (R)-pantoate from 3-methyl-2-oxobutanoate: step 1/2. Its function is as follows. Catalyzes the reversible reaction in which hydroxymethyl group from 5,10-methylenetetrahydrofolate is transferred onto alpha-ketoisovalerate to form ketopantoate. This Synechococcus elongatus (strain ATCC 33912 / PCC 7942 / FACHB-805) (Anacystis nidulans R2) protein is 3-methyl-2-oxobutanoate hydroxymethyltransferase.